Consider the following 253-residue polypeptide: Diphthine synthase (253 aa).

Residues Asp83, Leu86, 111-112 (SI), Leu163, and Leu205 each bind S-adenosyl-L-methionine.

The protein belongs to the diphthine synthase family. As to quaternary structure, homodimer.

The catalysed reaction is 2-[(3S)-amino-3-carboxypropyl]-L-histidyl-[translation elongation factor 2] + 3 S-adenosyl-L-methionine = diphthine-[translation elongation factor 2] + 3 S-adenosyl-L-homocysteine + 3 H(+). It participates in protein modification; peptidyl-diphthamide biosynthesis. Functionally, S-adenosyl-L-methionine-dependent methyltransferase that catalyzes the trimethylation of the amino group of the modified target histidine residue in translation elongation factor 2 (EF-2), to form an intermediate called diphthine. The three successive methylation reactions represent the second step of diphthamide biosynthesis. The chain is Diphthine synthase from Pyrobaculum neutrophilum (strain DSM 2338 / JCM 9278 / NBRC 100436 / V24Sta) (Thermoproteus neutrophilus).